Consider the following 57-residue polypeptide: Enolase (57 aa).

The active-site Proton donor is Glu-25.

The protein belongs to the enolase family. The cofactor is Mg(2+).

It is found in the cytoplasm. The protein resides in the secreted. It localises to the cell surface. It catalyses the reaction (2R)-2-phosphoglycerate = phosphoenolpyruvate + H2O. The protein operates within carbohydrate degradation; glycolysis; pyruvate from D-glyceraldehyde 3-phosphate: step 4/5. Catalyzes the reversible conversion of 2-phosphoglycerate (2-PG) into phosphoenolpyruvate (PEP). It is essential for the degradation of carbohydrates via glycolysis. The polypeptide is Enolase (Clostridioides difficile (Peptoclostridium difficile)).